Here is a 1050-residue protein sequence, read N- to C-terminus: Beta-galactosidase (1050 aa).

Residues N110 and D209 each coordinate substrate. D209 contacts Na(+). 3 residues coordinate Mg(2+): E432, H434, and E477. Substrate is bound by residues E477 and 553–556 (EYAH). E477 serves as the catalytic Proton donor. The Nucleophile role is filled by E553. N613 contacts Mg(2+). Na(+) contacts are provided by F617 and N620. Substrate-binding residues include N620 and W1023.

The protein belongs to the glycosyl hydrolase 2 family. In terms of assembly, homotetramer. Mg(2+) is required as a cofactor. Na(+) serves as cofactor.

It carries out the reaction Hydrolysis of terminal non-reducing beta-D-galactose residues in beta-D-galactosides.. This is Beta-galactosidase from Yersinia enterocolitica serotype O:8 / biotype 1B (strain NCTC 13174 / 8081).